The chain runs to 436 residues: Aminopeptidase C (436 aa).

Catalysis depends on residues Cys-68, His-356, and Asn-378.

It belongs to the peptidase C1 family. Homohexamer.

It carries out the reaction Inactivates bleomycin B2 (a cytotoxic glycometallopeptide) by hydrolysis of a carboxyamide bond of beta-aminoalanine, but also shows general aminopeptidase activity. The specificity varies somewhat with source, but amino acid arylamides of Met, Leu and Ala are preferred.. Hydrolyzes naphthylamide-substituted amino acids as well as di- and tripeptides in which the half-cystine residue is involved in a disulfide loop, notably in oxytocin and vasopressin. Also has a bleomycin hydrolase activity. In Lactococcus lactis subsp. lactis (strain IL1403) (Streptococcus lactis), this protein is Aminopeptidase C (pepC).